Consider the following 622-residue polypeptide: Wall-associated receptor kinase-like 21 (622 aa).

Positions 1-21 (MAETPQPYLIFVFFVFTLTVA) are cleaved as a signal peptide. At 22-247 (TQTTGSVKCK…LVYKRKGLHK (226 aa)) the chain is on the extracellular side. 5 N-linked (GlcNAc...) asparagine glycosylation sites follow: asparagine 50, asparagine 114, asparagine 131, asparagine 160, and asparagine 195. A helical transmembrane segment spans residues 248–268 (LVVLGTAGILVGVLVIVVLIA). At 269–622 (TYFFRNKQSA…MKRQQSFPRE (354 aa)) the chain is on the cytoplasmic side. The region spanning 314–594 (FSDKNMLGTG…EITEDLHRIK (281 aa)) is the Protein kinase domain. ATP-binding positions include 320–328 (LGTGAYGTV) and lysine 342. Aspartate 439 functions as the Proton acceptor in the catalytic mechanism.

It belongs to the protein kinase superfamily. Ser/Thr protein kinase family.

Its subcellular location is the membrane. The catalysed reaction is L-seryl-[protein] + ATP = O-phospho-L-seryl-[protein] + ADP + H(+). It catalyses the reaction L-threonyl-[protein] + ATP = O-phospho-L-threonyl-[protein] + ADP + H(+). Serine/threonine-protein kinase that may function as a signaling receptor of extracellular matrix component. This is Wall-associated receptor kinase-like 21 (WAKL21) from Arabidopsis thaliana (Mouse-ear cress).